The sequence spans 245 residues: Anti-Pycsar protein Apyc1 (245 aa).

The tract at residues 19-219 (FNNNALLYAG…EIQSQILLKH (201 aa)) is beta-lactamase-like. Zn(2+) contacts are provided by H61, H63, D65, H66, H145, D165, and H219.

Belongs to the anti-Pycsar protein Apyc1 family. In terms of assembly, homodimer. The cofactor is Zn(2+).

It carries out the reaction 3',5'-cyclic CMP + H2O = CMP + H(+). The enzyme catalyses 3',5'-cyclic UMP + H2O = UMP + H(+). Functionally, counteracts the endogenous Pycsar antiviral defense system. Phosphodiesterase that enables metal-dependent hydrolysis of host cyclic nucleotide Pycsar defense signals such as cCMP and cUMP. The chain is Anti-Pycsar protein Apyc1 from Paenibacillus sp. (strain J14).